The chain runs to 156 residues: Ribosome maturation factor RimP (156 aa).

The protein belongs to the RimP family.

The protein localises to the cytoplasm. Its function is as follows. Required for maturation of 30S ribosomal subunits. The sequence is that of Ribosome maturation factor RimP from Prochlorococcus marinus (strain NATL1A).